A 312-amino-acid chain; its full sequence is Very-long-chain 3-oxoacyl-CoA reductase (312 aa).

The helical transmembrane segment at 4–24 threads the bilayer; sequence APPAAGFLYWVGASTIAYLAL. 50–79 is an NADP(+) binding site; the sequence is GEWAVVTGGTDGIGKAYAEELAKRGMKIVL. The next 2 helical transmembrane spans lie at 182–202 and 269–285; these read GVIL…LTIY and TTGY…NSIM. S189 lines the substrate pocket. The active-site Proton acceptor is the Y202. Positions 308-312 match the Di-lysine motif motif; it reads KRKKN.

This sequence belongs to the short-chain dehydrogenases/reductases (SDR) family. 17-beta-HSD 3 subfamily. Expressed in most tissues tested.

The protein localises to the endoplasmic reticulum membrane. It catalyses the reaction a very-long-chain (3R)-3-hydroxyacyl-CoA + NADP(+) = a very-long-chain 3-oxoacyl-CoA + NADPH + H(+). The catalysed reaction is 17beta-estradiol + NAD(+) = estrone + NADH + H(+). It carries out the reaction 17beta-estradiol + NADP(+) = estrone + NADPH + H(+). The enzyme catalyses 3-oxooctadecanoyl-CoA + NADPH + H(+) = (3R)-hydroxyoctadecanoyl-CoA + NADP(+). It catalyses the reaction (7Z,10Z,13Z,16Z)-3-oxodocosatetraenoyl-CoA + NADPH + H(+) = (3R)-hydroxy-(7Z,10Z,13Z,16Z)-docosatetraenoyl-CoA + NADP(+). The catalysed reaction is 3-oxo-(7Z,10Z,13Z,16Z,19Z)-docosapentaenoyl-CoA + NADPH + H(+) = (3R)-hydroxy-(7Z,10Z,13Z,16Z,19Z)-docosapentaenoyl-CoA + NADP(+). It carries out the reaction (8Z,11Z,14Z)-3-oxoeicosatrienoyl-CoA + NADPH + H(+) = (3R)-hydroxy-(8Z,11Z,14Z)-eicosatrienoyl-CoA + NADP(+). It functions in the pathway lipid metabolism; fatty acid biosynthesis. It participates in steroid biosynthesis; estrogen biosynthesis. In terms of biological role, catalyzes the second of the four reactions of the long-chain fatty acids elongation cycle. This endoplasmic reticulum-bound enzymatic process, allows the addition of two carbons to the chain of long- and very long-chain fatty acids/VLCFAs per cycle. This enzyme has a 3-ketoacyl-CoA reductase activity, reducing 3-ketoacyl-CoA to 3-hydroxyacyl-CoA, within each cycle of fatty acid elongation. Thereby, it may participate in the production of VLCFAs of different chain lengths that are involved in multiple biological processes as precursors of membrane lipids and lipid mediators. May also catalyze the transformation of estrone (E1) into estradiol (E2) and play a role in estrogen formation. In Mus musculus (Mouse), this protein is Very-long-chain 3-oxoacyl-CoA reductase.